The chain runs to 285 residues: MKYIGAHVSAAGGLANAAIRAVEIDATAFALFTKNQRQWRAAPLTTQTIDEFKAACEKYHYTSAQILPHDSYLINLGHPVTEALEKSRDAFIDEMQRCEQLGLSLLNFHPGSHLMQISEEDCLARIAESINIALDKTQGVTAVIENTAGQGSNLGFKFEHLAAIIDGVEDKFRVGVCIDTCHAFAAGYDLRTPAECEKTFADFARIVGFKYLRGMHLNDAKSTFGSRVDRHHSLGEGNIGHDAFRWIMQDDRFDGIPLILETINPDIWAEEIAWLKAQQTEKAVA.

Zn(2+) contacts are provided by histidine 69, histidine 109, glutamate 145, aspartate 179, histidine 182, histidine 216, aspartate 229, histidine 231, and glutamate 261.

Belongs to the AP endonuclease 2 family. Requires Zn(2+) as cofactor.

It carries out the reaction Endonucleolytic cleavage to 5'-phosphooligonucleotide end-products.. Functionally, endonuclease IV plays a role in DNA repair. It cleaves phosphodiester bonds at apurinic or apyrimidinic (AP) sites, generating a 3'-hydroxyl group and a 5'-terminal sugar phosphate. The polypeptide is Probable endonuclease 4 (Shigella sonnei (strain Ss046)).